Reading from the N-terminus, the 426-residue chain is Serine--tRNA ligase (426 aa).

Residue 231–233 (TAE) participates in L-serine binding. 262 to 264 (RSE) is an ATP binding site. Residue E285 participates in L-serine binding. An ATP-binding site is contributed by 349 to 352 (EISS). S385 provides a ligand contact to L-serine.

The protein belongs to the class-II aminoacyl-tRNA synthetase family. Type-1 seryl-tRNA synthetase subfamily. In terms of assembly, homodimer. The tRNA molecule binds across the dimer.

The protein localises to the cytoplasm. The catalysed reaction is tRNA(Ser) + L-serine + ATP = L-seryl-tRNA(Ser) + AMP + diphosphate + H(+). It catalyses the reaction tRNA(Sec) + L-serine + ATP = L-seryl-tRNA(Sec) + AMP + diphosphate + H(+). Its pathway is aminoacyl-tRNA biosynthesis; selenocysteinyl-tRNA(Sec) biosynthesis; L-seryl-tRNA(Sec) from L-serine and tRNA(Sec): step 1/1. Its function is as follows. Catalyzes the attachment of serine to tRNA(Ser). Is also able to aminoacylate tRNA(Sec) with serine, to form the misacylated tRNA L-seryl-tRNA(Sec), which will be further converted into selenocysteinyl-tRNA(Sec). This Brevibacillus brevis (strain 47 / JCM 6285 / NBRC 100599) protein is Serine--tRNA ligase.